Consider the following 116-residue polypeptide: Large ribosomal subunit protein bL17 (116 aa).

This sequence belongs to the bacterial ribosomal protein bL17 family. Part of the 50S ribosomal subunit. Contacts protein L32.

The chain is Large ribosomal subunit protein bL17 from Sulfurovum sp. (strain NBC37-1).